Reading from the N-terminus, the 145-residue chain is uncharacterized protein (145 aa).

The tract at residues 62–145 (LPSVGGRMTA…QLPQQGGCPG (84 aa)) is disordered. The span at 84–95 (ASSPEDPPLPHP) shows a compositional bias: pro residues.

This is an uncharacterized protein from Homo sapiens (Human).